The primary structure comprises 179 residues: Large ribosomal subunit protein uL5 (179 aa).

The protein belongs to the universal ribosomal protein uL5 family. As to quaternary structure, part of the 50S ribosomal subunit; part of the 5S rRNA/L5/L18/L25 subcomplex. Contacts the 5S rRNA and the P site tRNA. Forms a bridge to the 30S subunit in the 70S ribosome.

Its function is as follows. This is one of the proteins that bind and probably mediate the attachment of the 5S RNA into the large ribosomal subunit, where it forms part of the central protuberance. In the 70S ribosome it contacts protein S13 of the 30S subunit (bridge B1b), connecting the 2 subunits; this bridge is implicated in subunit movement. Contacts the P site tRNA; the 5S rRNA and some of its associated proteins might help stabilize positioning of ribosome-bound tRNAs. The sequence is that of Large ribosomal subunit protein uL5 from Bordetella petrii (strain ATCC BAA-461 / DSM 12804 / CCUG 43448).